The sequence spans 298 residues: N-acetylmuramic acid 6-phosphate etherase (298 aa).

The SIS domain maps to 57 to 220 (IAAAFGKGGR…STGAMIRTGK (164 aa)). The active-site Proton donor is E85. E116 is a catalytic residue.

This sequence belongs to the GCKR-like family. MurNAc-6-P etherase subfamily. As to quaternary structure, homodimer.

The enzyme catalyses N-acetyl-D-muramate 6-phosphate + H2O = N-acetyl-D-glucosamine 6-phosphate + (R)-lactate. It participates in amino-sugar metabolism; 1,6-anhydro-N-acetylmuramate degradation. The protein operates within amino-sugar metabolism; N-acetylmuramate degradation. It functions in the pathway cell wall biogenesis; peptidoglycan recycling. Its function is as follows. Specifically catalyzes the cleavage of the D-lactyl ether substituent of MurNAc 6-phosphate, producing GlcNAc 6-phosphate and D-lactate. Together with AnmK, is also required for the utilization of anhydro-N-acetylmuramic acid (anhMurNAc) either imported from the medium or derived from its own cell wall murein, and thus plays a role in cell wall recycling. This chain is N-acetylmuramic acid 6-phosphate etherase, found in Aeromonas hydrophila subsp. hydrophila (strain ATCC 7966 / DSM 30187 / BCRC 13018 / CCUG 14551 / JCM 1027 / KCTC 2358 / NCIMB 9240 / NCTC 8049).